The following is a 513-amino-acid chain: Microcin J25-processing protein McjC (513 aa).

One can recognise an Asparagine synthetase domain in the interval 176 to 436 (STIDSIIDNI…FGSDIFWKKT (261 aa)).

It is found in the cytoplasm. Functionally, along with McjB, necessary and sufficient to process the inactive microcin J25 (McjA) precursor into the active peptide. May be involved in the formation of the amide bond between Gly-38 and Glu-53 of McjA. This chain is Microcin J25-processing protein McjC (mcjC), found in Escherichia coli.